A 470-amino-acid chain; its full sequence is Poly(A) polymerase catalytic subunit (470 aa).

Active-site residues include Asp-192 and Asp-194.

This sequence belongs to the poxviridae poly(A) polymerase catalytic subunit family. Heterodimer of a large (catalytic) subunit and a small (regulatory) subunit.

It catalyses the reaction RNA(n) + ATP = RNA(n)-3'-adenine ribonucleotide + diphosphate. Its function is as follows. Polymerase that creates the 3'-poly(A) tail of mRNA's. The protein is Poly(A) polymerase catalytic subunit (PAPL) of Erythrocebus patas (Red guenon).